Here is a 633-residue protein sequence, read N- to C-terminus: MINIHFSNNLCKQFHRGIKGHDIVNDLFPKLKNETIAAKVNGELYDLSREIIENCTFEVITINSEEGLEIIRHDTAHIMAQAVKEMFPDVQITIGPTIKDGFYYDFATNHNFSSDDLEIIEKKMIEIINKNESFIREVWSREEAIKFFSSIGEDYKVKIISNIPSNENITVYKQGSFTDLCRGPHAPSTKTSRAFKLTKVSGSYWQGNSNNERLQRIYGTAWRNEEELKLYLNNLIEAEKRDHRKIGRELELFHIQNEACGQIFWHTKGWTIYRIIENYIRKKLENNGYIEVKTPILLNKELWEKSGHWDKFRENMFLSEAEDKTLAIKPMNCPCHIQIFNSKIRSYRDLPIRMAEFGTCHRYEASGALHGLMRVRGFTQDDAHIFCTESQITSEALKFCNLLIEIYKDFGFTDILVKFSDRPKNRAGSDEIWDKAEAALKKSVEVANLSYVLNPGDGAFYGPKLEFTLKDAIGREWQCGTLQMDFVLPERLGAYYIGSDGKKHHPVMLHRAILGTFERFIGILIEHHSGKFPMWLAPIQLSILTISEDSINYANSLKIKAEEHNIRVELDTTNEKINYKIRNHIHKKVPVFWIVGKKEVEENSVSIRYLESNKQHVMPIDKALKTLLTCASI.

Residues 1-61 enclose the TGS domain; that stretch reads MINIHFSNNL…IENCTFEVIT (61 aa). The interval 242–533 is catalytic; sequence DHRKIGRELE…LIEHHSGKFP (292 aa). Zn(2+) is bound by residues cysteine 333, histidine 384, and histidine 510.

It belongs to the class-II aminoacyl-tRNA synthetase family. Homodimer. It depends on Zn(2+) as a cofactor.

It is found in the cytoplasm. It catalyses the reaction tRNA(Thr) + L-threonine + ATP = L-threonyl-tRNA(Thr) + AMP + diphosphate + H(+). Catalyzes the attachment of threonine to tRNA(Thr) in a two-step reaction: L-threonine is first activated by ATP to form Thr-AMP and then transferred to the acceptor end of tRNA(Thr). Also edits incorrectly charged L-seryl-tRNA(Thr). In Ehrlichia chaffeensis (strain ATCC CRL-10679 / Arkansas), this protein is Threonine--tRNA ligase.